Reading from the N-terminus, the 291-residue chain is Taste receptor type 2 member 16 (291 aa).

Residue Met-1 is a topological domain, extracellular. The chain crosses the membrane as a helical span at residues 2 to 22 (IPIQLTVFFMIIYVLESLTII). Residues 23 to 41 (VQSSLIVAVLGREWLQVRR) lie on the Cytoplasmic side of the membrane. Residues 42–62 (LMPVDMILISLGISRFCLQWA) form a helical membrane-spanning segment. At 63 to 84 (SMLNNFCSYFNLNYVLCNLTIT) the chain is on the extracellular side. N-linked (GlcNAc...) asparagine glycosylation occurs at Asn-80. Residues 85 to 105 (WEFFNILTFWLNSLLTVFYCI) form a helical membrane-spanning segment. The Cytoplasmic segment spans residues 106-125 (KVSSFTHHIFLWLRWRILRL). Residues 126–146 (FPWILLGSLMITCVTIIPSAI) traverse the membrane as a helical segment. At 147–182 (GNYIQIQLLTMEHLPRNSTVTDKLEKFHQYQFQAHT) the chain is on the extracellular side. N-linked (GlcNAc...) asparagine glycosylation is present at Asn-163. A helical membrane pass occupies residues 183-203 (VALVIPFILFLASTILLMASL). Residues 204-228 (TKQIQHHSTGHCNPSMKAHFTALRS) are Cytoplasmic-facing. Residues 229–249 (LAVLFIVFTSYFLTILITIIG) form a helical membrane-spanning segment. Topologically, residues 250 to 257 (TLFDKRCW) are extracellular. The chain crosses the membrane as a helical span at residues 258–278 (LWVWEAFVYAFILMHSTSLML). Residues 279-291 (SSPTLKRILKGKC) are Cytoplasmic-facing.

This sequence belongs to the G-protein coupled receptor T2R family. As to quaternary structure, interacts with RTP3 and RTP4.

Its subcellular location is the cell membrane. Functionally, receptor that may play a role in the perception of bitterness and is gustducin-linked. May play a role in sensing the chemical composition of the gastrointestinal content. The activity of this receptor may stimulate alpha gustducin, mediate PLC-beta-2 activation and lead to the gating of TRPM5. The polypeptide is Taste receptor type 2 member 16 (TAS2R16) (Pan troglodytes (Chimpanzee)).